A 128-amino-acid polypeptide reads, in one-letter code: Cytochrome c-type biogenesis protein CcmE (128 aa).

Topologically, residues 1 to 8 are cytoplasmic; it reads MQKRVRNR. A helical; Signal-anchor for type II membrane protein transmembrane segment spans residues 9–29; it reads LITIIICFCSAFLGISIILYN. Residues 30–128 lie on the Periplasmic side of the membrane; that stretch reads LEKNIVFFLP…KHDENYRPPQ (99 aa). Heme-binding residues include His-120 and Tyr-124.

Belongs to the CcmE/CycJ family.

It is found in the cell inner membrane. Functionally, heme chaperone required for the biogenesis of c-type cytochromes. Transiently binds heme delivered by CcmC and transfers the heme to apo-cytochromes in a process facilitated by CcmF and CcmH. The chain is Cytochrome c-type biogenesis protein CcmE from Rickettsia rickettsii (strain Iowa).